We begin with the raw amino-acid sequence, 207 residues long: Interleukin-6 (207 aa).

A signal peptide spans 1 to 20 (MNSLSTSAFSLGLLLVMATA). Cys-67 and Cys-73 are joined by a disulfide. Ser-76 carries the post-translational modification Phosphoserine. Cys-96 and Cys-106 are oxidised to a cystine.

The protein belongs to the IL-6 superfamily. In terms of assembly, component of a hexamer of two molecules each of IL6, IL6R and IL6ST; first binds to IL6R to associate with the signaling subunit IL6ST. Interacts with IL6R (via the N-terminal ectodomain); this interaction may be affected by IL6R-binding with SORL1, hence decreasing IL6 cis signaling. Interacts with SORL1 (via the N-terminal ectodomain); this interaction leads to IL6 internalization and lysosomal degradation. May form a trimeric complex with the soluble SORL1 ectodomain and soluble IL6R receptor; this interaction might stabilize circulating IL6, hence promoting IL6 trans signaling.

Its subcellular location is the secreted. Its function is as follows. Cytokine with a wide variety of biological functions in immunity, tissue regeneration, and metabolism. Binds to IL6R, then the complex associates to the signaling subunit IL6ST/gp130 to trigger the intracellular IL6-signaling pathway. The interaction with the membrane-bound IL6R and IL6ST stimulates 'classic signaling', whereas the binding of IL6 and soluble IL6R to IL6ST stimulates 'trans-signaling'. Alternatively, 'cluster signaling' occurs when membrane-bound IL6:IL6R complexes on transmitter cells activate IL6ST receptors on neighboring receiver cells. Functionally, IL6 is a potent inducer of the acute phase response. Rapid production of IL6 contributes to host defense during infection and tissue injury, but excessive IL6 synthesis is involved in disease pathology. In the innate immune response, is synthesized by myeloid cells, such as macrophages and dendritic cells, upon recognition of pathogens through toll-like receptors (TLRs) at the site of infection or tissue injury. In the adaptive immune response, is required for the differentiation of B cells into immunoglobulin-secreting cells. Plays a major role in the differentiation of CD4(+) T cell subsets. Essential factor for the development of T follicular helper (Tfh) cells that are required for the induction of germinal-center formation. Required to drive naive CD4(+) T cells to the Th17 lineage. Also required for proliferation of myeloma cells and the survival of plasmablast cells. In terms of biological role, acts as an essential factor in bone homeostasis and on vessels directly or indirectly by induction of VEGF, resulting in increased angiogenesis activity and vascular permeability. Induces, through 'trans-signaling' and synergistically with IL1B and TNF, the production of VEGF. Involved in metabolic controls, is discharged into the bloodstream after muscle contraction increasing lipolysis and improving insulin resistance. 'Trans-signaling' in central nervous system also regulates energy and glucose homeostasis. Mediates, through GLP-1, crosstalk between insulin-sensitive tissues, intestinal L cells and pancreatic islets to adapt to changes in insulin demand. Also acts as a myokine. Plays a protective role during liver injury, being required for maintenance of tissue regeneration. Also has a pivotal role in iron metabolism by regulating HAMP/hepcidin expression upon inflammation or bacterial infection. Through activation of IL6ST-YAP-NOTCH pathway, induces inflammation-induced epithelial regeneration. The chain is Interleukin-6 (IL6) from Canis lupus familiaris (Dog).